The following is a 119-amino-acid chain: Large ribosomal subunit protein bL19 (119 aa).

It belongs to the bacterial ribosomal protein bL19 family.

Its function is as follows. This protein is located at the 30S-50S ribosomal subunit interface and may play a role in the structure and function of the aminoacyl-tRNA binding site. The chain is Large ribosomal subunit protein bL19 from Photobacterium profundum (strain SS9).